A 539-amino-acid chain; its full sequence is Chaperone Ric-8A (539 aa).

Residues 507–539 (MGITPSGNLAPMENAIRDMADERSSSDSDLGLD) are disordered. Residues 521-532 (AIRDMADERSSS) show a composition bias toward basic and acidic residues.

Belongs to the synembryn family.

It localises to the cytoplasm. The protein localises to the cell cortex. Functionally, chaperone that specifically binds and folds nascent G alpha proteins prior to G protein heterotrimer formation, promoting their stability and activity: folds GNAI1, GNAO1, GNA13 and GNAQ. Does not fold G(s) G-alpha proteins GNAS nor GNAL. Also acts as a guanine nucleotide exchange factor (GEF) for G alpha proteins by stimulating exchange of bound GDP for free GTP. The sequence is that of Chaperone Ric-8A (RIC8A) from Gallus gallus (Chicken).